Reading from the N-terminus, the 537-residue chain is Cytochrome P450 monooxygenase claR (537 aa).

A helical membrane pass occupies residues 23–43; that stretch reads VVTITEVALGIITLYLLGSYI. Position 454 (Cys-454) interacts with heme.

Belongs to the cytochrome P450 family. The cofactor is heme.

The protein resides in the membrane. The enzyme catalyses (2E)-geranylhydroquinone + reduced [NADPH--hemoprotein reductase] + O2 = wigandol + oxidized [NADPH--hemoprotein reductase] + 2 H2O + H(+). It participates in secondary metabolite biosynthesis; terpenoid biosynthesis. In terms of biological role, cytochrome P450 monooxygenase; part of the gene cluster that mediates the biosynthesis of clavilactone A, a meroterpenoid that features a unique benzo-fused ten-membered carbocyclic ring unit with an alpha,beta-epoxy-gamma-lactone moiety, forming an intriguing 10/5/3 tricyclic nested skeleton. ClaR, ClaS and ClaT are sufficient to produce clavilactone A. ClaR acts as a macrocyclase to catalyze the oxidative cyclization of the isopentenyl to the nonterpenoid moieties to form the benzo-fused macrocycle, leading to wigantol. The biosynthesis begins with the prenyltransferase claS that transfers geranyl pyrophosphate (GPP) to hydroquinone to produces geranylhydroquinone. The cytochrome P450 monooxygenase claR then catalyzes the diradical coupling reaction between the intramolecular hydroquinone and allyl moieties to form the benzo-fused ten-membered carbocyclic ring unit of wigantol. Finally the cytochrome P450 monooxygenase claT exquisitely and stereoselectively assembles the alpha,beta-epoxy-gamma-lactone moiety, producing clavilactone A via arnebinol A. This is Cytochrome P450 monooxygenase claR from Ampulloclitocybe clavipes (Club foot).